Reading from the N-terminus, the 288-residue chain is Probable endonuclease 4 (288 aa).

Zn(2+)-binding residues include His-75, His-115, Glu-153, Asp-187, His-190, His-224, Asp-237, His-239, and Glu-269.

It belongs to the AP endonuclease 2 family. It depends on Zn(2+) as a cofactor.

The enzyme catalyses Endonucleolytic cleavage to 5'-phosphooligonucleotide end-products.. Functionally, endonuclease IV plays a role in DNA repair. It cleaves phosphodiester bonds at apurinic or apyrimidinic (AP) sites, generating a 3'-hydroxyl group and a 5'-terminal sugar phosphate. This chain is Probable endonuclease 4, found in Chlamydia trachomatis serovar A (strain ATCC VR-571B / DSM 19440 / HAR-13).